Here is a 389-residue protein sequence, read N- to C-terminus: ELAV-like protein 2 (389 aa).

RRM domains follow at residues 66–145 (TNLI…YARP), 153–233 (ANLY…FANN), and 306–384 (WCIF…FKTS).

It belongs to the RRM elav family. As to quaternary structure, part of a ribonucleoprotein (RNP) complex, at least composed of elavl1/elrA and/or elavl2/elrB, igf2bp3/vg1RBP, ddx6/Xp54, ybx2/frgy2, lsm14b/rap55b and, in a subset of RNP complexes, stau1/staufen. Binds RNA as a homooligomer. As to expression, expressed in brain, testis and ovary. Ovarian expression is restricted to follicle cells surrounding the oocyte. From the early tailbud stage, expression is neural-specific and is seen in both the central and peripheral nervous system in differentiating neurons but not proliferating precursors. Expressed in the retina from stage 32 with expression becoming restricted to the ganglion cell layer by later stages.

The protein resides in the cytoplasm. The protein localises to the cell cortex. Functionally, binds to poly-U elements and AU-rich elements (AREs) in the 3'-UTR of target mRNAs. Required for the vegetal localization of vg1 mRNA. Probably required for nervous system development. The protein is ELAV-like protein 2 (elavl2) of Xenopus laevis (African clawed frog).